A 125-amino-acid polypeptide reads, in one-letter code: Glycine cleavage system H protein 1 (125 aa).

The Lipoyl-binding domain occupies lysine 22 to arginine 103. At lysine 63 the chain carries N6-lipoyllysine.

Belongs to the GcvH family. The glycine cleavage system is composed of four proteins: P, T, L and H. (R)-lipoate is required as a cofactor.

Functionally, the glycine cleavage system catalyzes the degradation of glycine. The H protein shuttles the methylamine group of glycine from the P protein to the T protein. The chain is Glycine cleavage system H protein 1 from Caldanaerobacter subterraneus subsp. tengcongensis (strain DSM 15242 / JCM 11007 / NBRC 100824 / MB4) (Thermoanaerobacter tengcongensis).